Consider the following 371-residue polypeptide: Alanine racemase (371 aa).

Lys-35 serves as the catalytic Proton acceptor; specific for D-alanine. Position 35 is an N6-(pyridoxal phosphate)lysine (Lys-35). Residue Arg-130 coordinates substrate. Residue Tyr-256 is the Proton acceptor; specific for L-alanine of the active site. A substrate-binding site is contributed by Met-304.

It belongs to the alanine racemase family. The cofactor is pyridoxal 5'-phosphate.

It carries out the reaction L-alanine = D-alanine. Its pathway is amino-acid biosynthesis; D-alanine biosynthesis; D-alanine from L-alanine: step 1/1. Catalyzes the interconversion of L-alanine and D-alanine. May also act on other amino acids. This chain is Alanine racemase (alr), found in Verminephrobacter eiseniae (strain EF01-2).